The following is a 710-amino-acid chain: Low-temperature-induced 78 kDa protein (710 aa).

3 disordered regions span residues 1–198 (MDQT…LDGQ), 225–269 (YQSK…RDLS), and 305–507 (GFGD…STYT). Residues 14 to 25 (QHPEEVEHHENG) show a composition bias toward basic and acidic residues. Over residues 29 to 41 (MFRKVKARAKKFK) the composition is skewed to basic residues. Basic and acidic residues predominate over residues 49–58 (QSNEHEQDHD). A compositionally biased stretch (acidic residues) spans 59–73 (LVEEDDDDDELEPEV). Residues 138 to 168 (SDKEEKRDVPIHHPLSELSDREESRETHHES) are compositionally biased toward basic and acidic residues. Residues 169-187 (LNTPVSLLSGTEDVTSTFA) are compositionally biased toward polar residues. A run of 5 repeats spans residues 303–316 (PVGFGDESGAELEK), 317–331 (DFPTRSHDFDMKTET), 336–350 (NSPSRSHEFDLKTES), 357–370 (PMGFGSESGAELEK), and 398–412 (NFPVRSHELDLKNES). The tract at residues 303-370 (PVGFGDESGA…GSESGAELEK (68 aa)) is 2 X 14 AA repeats of P-[MV]-G-F-G-[DS]-E-S-G-A-E-L-E-K. 6 stretches are compositionally biased toward basic and acidic residues: residues 313–331 (ELEKDFPTRSHDFDMKTET), 340–352 (RSHEFDLKTESGN), 367–380 (ELEKEFDQKNDSGR), 402–418 (RSHELDLKNESDIDKDV), 442–466 (EDKFPARSDDVEVETELGRDPKTET), and 475–487 (SHPKERDEFKESR). A 3 X 15 AA repeats of [DN]-[FS]-P-[STV]-R-S-H-[DE]-[FL]-D-[LM]-K-[NT]-E-[ST] region spans residues 317 to 412 (DFPTRSHDFD…SHELDLKNES (96 aa)). Repeat copies occupy residues 510-514 (FASML), 532-536 (VDEKL), and 550-554 (VTTKL). The segment at 510-600 (FASMLGYSGE…AFSDMVAEKL (91 aa)) is 5 X 5 AA repeats of [FV]-[ADT]-[EST]-[KM]-L. The disordered stretch occupies residues 537–577 (TPVNEKDQETESAVTTKLPISGGGSGVEEQRGEDKSVSGRD). Basic and acidic residues predominate over residues 564–577 (EEQRGEDKSVSGRD). A run of 2 repeats spans residues 579–583 (VAEKL) and 596–600 (VAEKL). The tract at residues 601-710 (QIGGEEEKKE…STVVPVQKEL (110 aa)) is disordered. The segment covering 605–626 (EEEKKETTTKEVEKISTEKAAS) has biased composition (basic and acidic residues). Residue Ser-626 is modified to Phosphoserine. The span at 638 to 654 (GGGGMVGRIKGWFGGGA) shows a compositional bias: gly residues. Tandem repeats lie at residues 648 to 670 (GWFGGGATDEVKPESPHSVEEAP) and 674 to 696 (GWFGGGATEEVKPKSPHSVEESP). Residues 648 to 696 (GWFGGGATDEVKPESPHSVEEAPKSSGWFGGGATEEVKPKSPHSVEESP) are 2 X 23 AA repeats. 2 stretches are compositionally biased toward basic and acidic residues: residues 656 to 670 (DEVKPESPHSVEEAP) and 682 to 693 (EEVKPKSPHSVE).

It belongs to the LTI78/LTI65 family. In terms of tissue distribution, accumulates rapidly in leaves, stems, roots, flower petals, filaments, and sepals during cold-acclimation.

Its subcellular location is the cytoplasm. Its function is as follows. Involved in responses to abiotic stresses. Regulates probably root elongation in cold conditions. In Arabidopsis thaliana (Mouse-ear cress), this protein is Low-temperature-induced 78 kDa protein.